A 122-amino-acid chain; its full sequence is Large ribosomal subunit protein uL14c (122 aa).

This sequence belongs to the universal ribosomal protein uL14 family. As to quaternary structure, part of the 50S ribosomal subunit.

The protein resides in the plastid. It localises to the chloroplast. Functionally, binds to 23S rRNA. In Eucalyptus globulus subsp. globulus (Tasmanian blue gum), this protein is Large ribosomal subunit protein uL14c.